Reading from the N-terminus, the 588-residue chain is Pre-mRNA-splicing ATP-dependent RNA helicase PRP28 (588 aa).

The disordered stretch occupies residues 15 to 94; sequence NKKKGLDENT…PSKQNGSKFH (80 aa). Basic and acidic residues-rich tracts occupy residues 35–49 and 60–83; these read NKQERSKQERLKENE and AKVEIKKVNSRDDSFFNETNDKKR. S69 bears the Phosphoserine mark. The short motif at 172–202 is the Q motif element; it reads RNWEELNIIPRDLLRVIIQELRFPSPTPIQR. Residues 208 to 399 form the Helicase ATP-binding domain; sequence VCNMKQYRDF…AGYMQKPVYA (192 aa). Residue 221-228 participates in ATP binding; the sequence is ASTGSGKT. Residues 341-344 carry the DEAD box motif; it reads DEAD. One can recognise a Helicase C-terminal domain in the interval 427–579; sequence KLKPIVAKYD…EAVKNKYNVG (153 aa).

It belongs to the DEAD box helicase family. DDX23/PRP28 subfamily. As to quaternary structure, component of the U5 snRNP complex, composed of at least BRR2, PRP8, PRP28, DIB1, LIN1, SMB1, SMD1, SMD2, SMD3, SME1, SMX2, SMX3, and SNU114, associated with the U5 snRNA.

The protein resides in the cytoplasm. It localises to the nucleus. It catalyses the reaction ATP + H2O = ADP + phosphate + H(+). Functionally, ATP-dependent RNA helicase involved in mRNA splicing. May destabilize the U1/5'-splice site duplex to permit an effective competition for the 5'-splice site by the U6 snRNA, resulting in the switch between U1 and U6 at the 5'-splice site. May also act to unwind the U4/U6 base-pairing interaction in the U4/U6/U5 snRNP, facilitating the first covalent step of splicing. In Saccharomyces cerevisiae (strain ATCC 204508 / S288c) (Baker's yeast), this protein is Pre-mRNA-splicing ATP-dependent RNA helicase PRP28 (PRP28).